The primary structure comprises 105 residues: Large ribosomal subunit protein mL49 (105 aa).

The N-terminal 15 residues, 1-15 (MRSSLKPVLSNLRFN), are a transit peptide targeting the mitochondrion.

The protein belongs to the mitochondrion-specific ribosomal protein mL49 family. Component of the mitochondrial large ribosomal subunit (mt-LSU). Mature yeast 74S mitochondrial ribosomes consist of a small (37S) and a large (54S) subunit. The 37S small subunit contains a 15S ribosomal RNA (15S mt-rRNA) and at least 32 different proteins. The 54S large subunit contains a 21S rRNA (21S mt-rRNA) and at least 45 different proteins.

It is found in the mitochondrion. Functionally, component of the mitochondrial ribosome (mitoribosome), a dedicated translation machinery responsible for the synthesis of mitochondrial genome-encoded proteins, including at least some of the essential transmembrane subunits of the mitochondrial respiratory chain. The mitoribosomes are attached to the mitochondrial inner membrane and translation products are cotranslationally integrated into the membrane. The polypeptide is Large ribosomal subunit protein mL49 (img2) (Schizosaccharomyces pombe (strain 972 / ATCC 24843) (Fission yeast)).